The primary structure comprises 882 residues: Valine--tRNA ligase (882 aa).

The short motif at 48–58 is the 'HIGH' region element; it reads PNVTGKLHLGH. Residues 524–528 carry the 'KMSKS' region motif; that stretch reads KMSKS. Lys-527 serves as a coordination point for ATP. Residues 809 to 882 adopt a coiled-coil conformation; that stretch reads LAELLDLDEE…KRLAELKAAR (74 aa). The interval 844-866 is disordered; the sequence is GFTDRAPEKVVQEERDKQADYEQ. Positions 845-863 are enriched in basic and acidic residues; that stretch reads FTDRAPEKVVQEERDKQAD.

It belongs to the class-I aminoacyl-tRNA synthetase family. ValS type 1 subfamily. Monomer.

The protein resides in the cytoplasm. The enzyme catalyses tRNA(Val) + L-valine + ATP = L-valyl-tRNA(Val) + AMP + diphosphate. Functionally, catalyzes the attachment of valine to tRNA(Val). As ValRS can inadvertently accommodate and process structurally similar amino acids such as threonine, to avoid such errors, it has a 'posttransfer' editing activity that hydrolyzes mischarged Thr-tRNA(Val) in a tRNA-dependent manner. In Latilactobacillus sakei subsp. sakei (strain 23K) (Lactobacillus sakei subsp. sakei), this protein is Valine--tRNA ligase.